Reading from the N-terminus, the 310-residue chain is Olfactory receptor 8B12 (310 aa).

Residues 1 to 24 are Extracellular-facing; it reads MAAKNSSVTEFILEGLTHQPGLRI. N-linked (GlcNAc...) asparagine glycosylation is present at Asn-5. The chain crosses the membrane as a helical span at residues 25–45; sequence PLFFLFLGFYTVTVVGNLGLI. The Cytoplasmic segment spans residues 46-53; that stretch reads TLIGLNSH. A helical membrane pass occupies residues 54–74; the sequence is LHTPMYFFLFNLSLIDFCFST. Topologically, residues 75 to 98 are extracellular; it reads TITPKMLMSFVSRKNIISFTGCMT. Cysteines 96 and 188 form a disulfide. A helical transmembrane segment spans residues 99–119; the sequence is QLFFFCFFVVSESFILSAMAY. The Cytoplasmic portion of the chain corresponds to 120-138; sequence DRYVAICNPLLYTVTMSCQ. A helical membrane pass occupies residues 139 to 159; the sequence is VCLLLLLGAYGMGFAGAMAHT. Over 160–196 the chain is Extracellular; it reads GSIMNLTFCADNLVNHFMCDILPLLELSCNSSYMNEL. 2 N-linked (GlcNAc...) asparagine glycosylation sites follow: Asn-164 and Asn-189. The helical transmembrane segment at 197 to 216 threads the bilayer; it reads VVFIVVAVDVGMPIVTVFIS. Over 217-236 the chain is Cytoplasmic; that stretch reads YALILSSILHNSSTEGRSKA. The helical transmembrane segment at 237–257 threads the bilayer; it reads FSTCSSHIIVVSLFFGSGAFM. Over 258–270 the chain is Extracellular; the sequence is YLKPLSILPLEQG. A helical membrane pass occupies residues 271–291; that stretch reads KVSSLFYTIIVPVLNPLIYSL. The Cytoplasmic segment spans residues 292-310; the sequence is RNKDVKVALRRTLGRKIFS.

Belongs to the G-protein coupled receptor 1 family.

Its subcellular location is the cell membrane. In terms of biological role, odorant receptor. The protein is Olfactory receptor 8B12 (OR8B12) of Homo sapiens (Human).